Consider the following 428-residue polypeptide: 3-phosphoshikimate 1-carboxyvinyltransferase (428 aa).

3 residues coordinate 3-phosphoshikimate: K21, S22, and R26. Residue K21 participates in phosphoenolpyruvate binding. The phosphoenolpyruvate site is built by G91 and R119. 3-phosphoshikimate is bound by residues S164, Q166, D313, and K340. Position 166 (Q166) interacts with phosphoenolpyruvate. The active-site Proton acceptor is D313. Phosphoenolpyruvate-binding residues include R344 and R386.

The protein belongs to the EPSP synthase family. Monomer.

Its subcellular location is the cytoplasm. The enzyme catalyses 3-phosphoshikimate + phosphoenolpyruvate = 5-O-(1-carboxyvinyl)-3-phosphoshikimate + phosphate. The protein operates within metabolic intermediate biosynthesis; chorismate biosynthesis; chorismate from D-erythrose 4-phosphate and phosphoenolpyruvate: step 6/7. Functionally, catalyzes the transfer of the enolpyruvyl moiety of phosphoenolpyruvate (PEP) to the 5-hydroxyl of shikimate-3-phosphate (S3P) to produce enolpyruvyl shikimate-3-phosphate and inorganic phosphate. The sequence is that of 3-phosphoshikimate 1-carboxyvinyltransferase from Campylobacter jejuni subsp. doylei (strain ATCC BAA-1458 / RM4099 / 269.97).